A 617-amino-acid chain; its full sequence is MAIETQLPCDGDGVCMRCQVNPPSEETLTCGTCVTPWHVPCLLPESLASSTGEWECPDCSGVVVPSAAPGTGNARPESSGSVLVAAIRAIQADETLTEAEKAKKRQKLMSGGGDDGVDEEEKKKLEIFCSICIQLPERPITTPCGHNFCLKCFEKWAVGQGKLTCMICRSKIPRHVAKNPRINLALVSAIRLANVTKCSVEATAAKVHHIIRNQDRPEKAFTTERAVKTGKANAASGKFFVTIPRDHFGPIPAENDVTRKQGVLVGESWEDRQECRQWGAHFPHIAGIAGQSAVGAQSVALSGGYDDDEDHGEWFLYTGSGGRDLSGNKRINKKQSSDQAFKNMNESLRLSCKMGYPVRVVRSWKEKRSAYAPAEGVRYDGVYRIEKCWSNVGVQGSFKVCRYLFVRCDNEPAPWTSDEHGDRPRPLPNVPELETAADLFVRKESPSWDFDEAEGRWKWMKSPPVSRMALDPEERKKNKRAKNTMKARLLKEFSCQICREVLSLPVTTPCAHNFCKACLEAKFAGITQLRERSNGGRKLRAKKNIMTCPCCTTDLSEFLQNPQVNREMMEIIENFKKSEEEADASISEEEEEESEPPTKKIKMDNNSVGGSGTSLSA.

Residues 12–62 (DGVCMRCQVNPPSEETLTCGTCVTPWHVPCLLPESLASSTGEWECPDCSGV) form a PHD-type zinc finger. The RING-type 1 zinc-finger motif lies at 129-169 (CSICIQLPERPITTPCGHNFCLKCFEKWAVGQGKLTCMICR). The YDG domain maps to 258–407 (TRKQGVLVGE…FKVCRYLFVR (150 aa)). The segment at 495-552 (CQICREVLSLPVTTPCAHNFCKACLEAKFAGITQLRERSNGGRKLRAKKNIMTCPCCT) adopts an RING-type 2 zinc-finger fold. A coiled-coil region spans residues 563 to 593 (QVNREMMEIIENFKKSEEEADASISEEEEEE). A disordered region spans residues 575–617 (FKKSEEEADASISEEEEEESEPPTKKIKMDNNSVGGSGTSLSA). Residues 580-595 (EEADASISEEEEEESE) are compositionally biased toward acidic residues. The span at 604-617 (DNNSVGGSGTSLSA) shows a compositional bias: polar residues.

Expressed in inflorescences and leaves.

It is found in the nucleus. The catalysed reaction is S-ubiquitinyl-[E2 ubiquitin-conjugating enzyme]-L-cysteine + [acceptor protein]-L-lysine = [E2 ubiquitin-conjugating enzyme]-L-cysteine + N(6)-ubiquitinyl-[acceptor protein]-L-lysine.. The protein operates within protein modification; protein ubiquitination. Functionally, E3 ubiquitin-protein ligase. Participates in CpG methylation-dependent transcriptional regulation and epigenetic transcriptional silencing. Mediates ubiquitination with the E2 ubiquitin-conjugating enzymes UBC11, UBC8 and UBC8 homologs (e.g. UBC10, UBC11, UBC28 and UBC29) but not with UBC27, UBC30, UBC32, UBC34 and UBC36. Promotes methylation-mediated gene silencing leading, for example, to early flowering. Can bind to CpG, CpNpG, and CpNpN DNA motifs, with a strong preference for methylated forms, and with highest affinity for CpG substrate. The polypeptide is E3 ubiquitin-protein ligase ORTHRUS 1 (ORTH1) (Arabidopsis thaliana (Mouse-ear cress)).